The primary structure comprises 322 residues: Protein IRREGULAR XYLEM 15 (322 aa).

The chain crosses the membrane as a helical span at residues 28 to 48 (LWLLAFVSFFTIVFLLTLLYT).

In terms of tissue distribution, expressed in rosette leaves, stems and siliques. Expressed in the xylem.

The protein resides in the golgi apparatus membrane. Its function is as follows. Required for xylan biosynthesis, but not directly involved in catalyzing the addition of sugars to the growing polymer. The polypeptide is Protein IRREGULAR XYLEM 15 (IRX15) (Arabidopsis thaliana (Mouse-ear cress)).